A 114-amino-acid chain; its full sequence is Large ribosomal subunit protein bL19 (114 aa).

This sequence belongs to the bacterial ribosomal protein bL19 family.

Its function is as follows. This protein is located at the 30S-50S ribosomal subunit interface and may play a role in the structure and function of the aminoacyl-tRNA binding site. The polypeptide is Large ribosomal subunit protein bL19 (Bacillus cereus (strain AH187)).